A 214-amino-acid chain; its full sequence is A-type ATP synthase subunit D (214 aa).

Belongs to the V-ATPase D subunit family. As to quaternary structure, has multiple subunits with at least A(3), B(3), C, D, E, F, H, I and proteolipid K(x).

It is found in the cell membrane. Functionally, component of the A-type ATP synthase that produces ATP from ADP in the presence of a proton gradient across the membrane. The polypeptide is A-type ATP synthase subunit D (Thermococcus kodakarensis (strain ATCC BAA-918 / JCM 12380 / KOD1) (Pyrococcus kodakaraensis (strain KOD1))).